A 299-amino-acid polypeptide reads, in one-letter code: Phosphatidylcholine-sterol acyltransferase (299 aa).

Residues Asn28 and Asn184 are each glycosylated (N-linked (GlcNAc...) asparagine). Cysteines 225 and 268 form a disulfide. Asp257 serves as the catalytic Charge relay system. N-linked (GlcNAc...) asparagine glycosylation occurs at Asn285. His289 (charge relay system) is an active-site residue. An N-linked (GlcNAc...) asparagine glycan is attached at Asn296.

Belongs to the AB hydrolase superfamily. Lipase family.

The protein localises to the secreted. The catalysed reaction is a sterol + a 1,2-diacyl-sn-glycero-3-phosphocholine = a sterol ester + a 1-acyl-sn-glycero-3-phosphocholine. Its activity is regulated as follows. APOA1 is the most potent activator in plasma. Also activated by APOE, APOC1 and APOA4. Functionally, central enzyme in the extracellular metabolism of plasma lipoproteins. Synthesized mainly in the liver and secreted into plasma where it converts cholesterol and phosphatidylcholines (lecithins) to cholesteryl esters and lysophosphatidylcholines on the surface of high and low density lipoproteins (HDLs and LDLs). The cholesterol ester is then transported back to the liver. Has a preference for plasma 16:0-18:2 or 18:O-18:2 phosphatidylcholines. Also produced in the brain by primary astrocytes, and esterifies free cholesterol on nascent APOE-containing lipoproteins secreted from glia and influences cerebral spinal fluid (CSF) APOE- and APOA1 levels. Together with APOE and the cholesterol transporter ABCA1, plays a key role in the maturation of glial-derived, nascent lipoproteins. Required for remodeling high-density lipoprotein particles into their spherical forms. The protein is Phosphatidylcholine-sterol acyltransferase (LCAT) of Micromys minutus (European harvest mouse).